A 486-amino-acid polypeptide reads, in one-letter code: MTTFYTVVSWLVILGYWVLIAGVTLRILMKRRAVPSAMAWLLIIYILPMVGIIAYLSVGELHLGKRRAERARAMWPSTAKWLNDLKACKHIFAQENSSVASSLFKLCERRQGIAGVKGNQLQLLTDSDDVMQALIRDIQLARHNIEMVFYIWQPGGMADQVAESLMAAARRGIHCRLMLDSAGSVAFFRSPWAAMMRNAGIEVVEALKVNLMRVFLRRMDLRQHRKMVMIDNYIAYTGSMNMVDPRFFKQDAGVGQWVDLMARMEGPVATAMGIVYSCDWEIETGKRILPPPPDVNIMPFEQASGHTIHTIASGPGFPEDLIHQALLTATYAAREYLIMTTPYFVPSDDLLHAICTAAQRGVDVSIILPRKNDSLLVGWASRAFFSELLAAGVKIYQFEGGLLHTKSVLVDGELSLVGTVNLDMRSLWLNFEITLVIDDTGFGADLAAVQDDYISRSRLLDARLWVKRPLWQRITERLFYFFSPLL.

2 consecutive transmembrane segments (helical) span residues 3–23 (TFYTVVSWLVILGYWVLIAGV) and 38–58 (MAWLLIIYILPMVGIIAYLSV). 2 consecutive PLD phosphodiesterase domains span residues 219 to 246 (MDLRQHRKMVMIDNYIAYTGSMNMVDPR) and 399 to 426 (EGGLLHTKSVLVDGELSLVGTVNLDMRS). Catalysis depends on residues His-224, Lys-226, Asp-231, His-404, Lys-406, and Asp-411.

Belongs to the phospholipase D family. Cardiolipin synthase subfamily. ClsA sub-subfamily.

It localises to the cell inner membrane. It carries out the reaction 2 a 1,2-diacyl-sn-glycero-3-phospho-(1'-sn-glycerol) = a cardiolipin + glycerol. Catalyzes the reversible phosphatidyl group transfer from one phosphatidylglycerol molecule to another to form cardiolipin (CL) (diphosphatidylglycerol) and glycerol. The sequence is that of Cardiolipin synthase A from Salmonella gallinarum (strain 287/91 / NCTC 13346).